Reading from the N-terminus, the 338-residue chain is Patr class I histocompatibility antigen, alpha chain G (338 aa).

An N-terminal signal peptide occupies residues 1-24; sequence MVVMAPRTLFLLLSGALTLTETWA. The alpha-1 stretch occupies residues 25 to 114; that stretch reads GSHSMRYFSA…LRGYYNQSEA (90 aa). Residues 25–308 lie on the Extracellular side of the membrane; that stretch reads GSHSMRYFSA…KQSSLPTIPI (284 aa). An N-linked (GlcNAc...) asparagine glycan is attached at asparagine 110. The tract at residues 115–206 is alpha-2; it reads SSHTLQWMIG…ENGKEMLQRA (92 aa). 2 disulfides stabilise this stretch: cysteine 125/cysteine 188 and cysteine 227/cysteine 283. The interval 207 to 298 is alpha-3; it reads DPPKTHVTHH…GLPEPLMLRW (92 aa). One can recognise an Ig-like C1-type domain in the interval 209–299; the sequence is PKTHVTHHPV…LPEPLMLRWK (91 aa). Residues 299–308 are connecting peptide; it reads KQSSLPTIPI. The chain crosses the membrane as a helical span at residues 309–332; it reads MGIVAGLVVLAAVVTGAAVAAVLW. The Cytoplasmic portion of the chain corresponds to 333–338; it reads RKKSSD.

Belongs to the MHC class I family. As to quaternary structure, heterodimer of an alpha chain and a beta chain (beta-2-microglobulin). Homodimer; disulfide-linked. Binds to LILRB1 and LILRB2.

It is found in the cell membrane. Involved in the presentation of foreign antigens to the immune system. In Pan troglodytes (Chimpanzee), this protein is Patr class I histocompatibility antigen, alpha chain G (Patr-G).